We begin with the raw amino-acid sequence, 259 residues long: uncharacterized protein (259 aa).

Residues 1-22 form the signal peptide; sequence MKHSKKLLLCISFLLITVFISG. The N-palmitoyl cysteine moiety is linked to residue cysteine 23. Residue cysteine 23 is the site of S-diacylglycerol cysteine attachment.

The protein belongs to the staphylococcal tandem lipoprotein family.

It localises to the cell membrane. This is an uncharacterized protein from Staphylococcus epidermidis (strain ATCC 35984 / DSM 28319 / BCRC 17069 / CCUG 31568 / BM 3577 / RP62A).